A 139-amino-acid polypeptide reads, in one-letter code: uncharacterized protein (139 aa).

The 132-residue stretch at 8–139 folds into the HTH marR-type domain; sequence ANLLDHALTK…FLAIIAKLAQ (132 aa). The segment at residues 53 to 76 is a DNA-binding region (H-T-H motif); the sequence is IKDILKEVTLSPSATTTALNHLEQ.

This is an uncharacterized protein from Bacillus subtilis (strain 168).